A 31-amino-acid chain; its full sequence is Cyclotide vico-B (31 aa).

A cross-link (cyclopeptide (Gly-Asn)) is located at residues 1–31 (GSIPCAESCVYIPCITGIAGCSCKNKVCYYN). 3 cysteine pairs are disulfide-bonded: cysteine 5-cysteine 21, cysteine 9-cysteine 23, and cysteine 14-cysteine 28.

This sequence belongs to the cyclotide family. Bracelet subfamily. Post-translationally, this is a cyclic peptide.

Functionally, probably participates in a plant defense mechanism. This is Cyclotide vico-B from Viola cotyledon (Violeta).